A 142-amino-acid polypeptide reads, in one-letter code: Semaphorin-like protein VACWR164 (142 aa).

Positions Met-1–Met-142 constitute a Sema domain.

The protein belongs to the semaphorin family.

This Bos taurus (Bovine) protein is Semaphorin-like protein VACWR164.